Consider the following 91-residue polypeptide: DNA-binding protein HU (91 aa).

This sequence belongs to the bacterial histone-like protein family.

Its function is as follows. Histone-like DNA-binding protein which is capable of wrapping DNA to stabilize it, and thus to prevent its denaturation under extreme environmental conditions. The polypeptide is DNA-binding protein HU (hup) (Clostridium pasteurianum).